The chain runs to 354 residues: Adenine deaminase (354 aa).

Residues H19, H21, and H211 each contribute to the Zn(2+) site. E214 functions as the Proton donor in the catalytic mechanism. Residue D291 participates in Zn(2+) binding. Residue D292 coordinates substrate.

It belongs to the metallo-dependent hydrolases superfamily. Adenosine and AMP deaminases family. Adenine deaminase type 2 subfamily. Zn(2+) is required as a cofactor.

The protein localises to the cytoplasm. The protein resides in the nucleus. The enzyme catalyses adenine + H2O + H(+) = hypoxanthine + NH4(+). Its function is as follows. Catalyzes the hydrolytic deamination of adenine to hypoxanthine. Plays an important role in the purine salvage pathway and in nitrogen catabolism. This is Adenine deaminase (aah1) from Aspergillus fumigatus (strain ATCC MYA-4609 / CBS 101355 / FGSC A1100 / Af293) (Neosartorya fumigata).